A 229-amino-acid chain; its full sequence is Enolase-phosphatase E1 (229 aa).

A disordered region spans residues 207-229 (RDPASHHPQVQRFDDIHPEQIPA). Residues 218-229 (RFDDIHPEQIPA) show a composition bias toward basic and acidic residues.

Belongs to the HAD-like hydrolase superfamily. MasA/MtnC family. Monomer. Mg(2+) serves as cofactor.

It carries out the reaction 5-methylsulfanyl-2,3-dioxopentyl phosphate + H2O = 1,2-dihydroxy-5-(methylsulfanyl)pent-1-en-3-one + phosphate. It participates in amino-acid biosynthesis; L-methionine biosynthesis via salvage pathway; L-methionine from S-methyl-5-thio-alpha-D-ribose 1-phosphate: step 3/6. The protein operates within amino-acid biosynthesis; L-methionine biosynthesis via salvage pathway; L-methionine from S-methyl-5-thio-alpha-D-ribose 1-phosphate: step 4/6. Bifunctional enzyme that catalyzes the enolization of 2,3-diketo-5-methylthiopentyl-1-phosphate (DK-MTP-1-P) into the intermediate 2-hydroxy-3-keto-5-methylthiopentenyl-1-phosphate (HK-MTPenyl-1-P), which is then dephosphorylated to form the acireductone 1,2-dihydroxy-3-keto-5-methylthiopentene (DHK-MTPene). This is Enolase-phosphatase E1 from Klebsiella pneumoniae subsp. pneumoniae (strain ATCC 700721 / MGH 78578).